The following is a 416-amino-acid chain: Serine hydroxymethyltransferase 1 (416 aa).

(6S)-5,6,7,8-tetrahydrofolate is bound by residues Leu-121 and 125–127 (GHL). Lys-229 carries the post-translational modification N6-(pyridoxal phosphate)lysine. Residues Glu-245 and 354–356 (SPF) contribute to the (6S)-5,6,7,8-tetrahydrofolate site.

Belongs to the SHMT family. Homodimer. Requires pyridoxal 5'-phosphate as cofactor.

The protein resides in the cytoplasm. It carries out the reaction (6R)-5,10-methylene-5,6,7,8-tetrahydrofolate + glycine + H2O = (6S)-5,6,7,8-tetrahydrofolate + L-serine. The protein operates within one-carbon metabolism; tetrahydrofolate interconversion. Its pathway is amino-acid biosynthesis; glycine biosynthesis; glycine from L-serine: step 1/1. Functionally, catalyzes the reversible interconversion of serine and glycine with tetrahydrofolate (THF) serving as the one-carbon carrier. This reaction serves as the major source of one-carbon groups required for the biosynthesis of purines, thymidylate, methionine, and other important biomolecules. Also exhibits THF-independent aldolase activity toward beta-hydroxyamino acids, producing glycine and aldehydes, via a retro-aldol mechanism. This Vibrio cholerae serotype O1 (strain ATCC 39315 / El Tor Inaba N16961) protein is Serine hydroxymethyltransferase 1.